A 100-amino-acid polypeptide reads, in one-letter code: Cytochrome b (100 aa).

The next 3 membrane-spanning stretches (helical) occupy residues 1-21, 45-66, and 81-100; these read MGSLLGLCLIVQIITGLFLAM, WLIRNFHANGASLFFICIYLHI, and WNIGVILLLLTMMTAFVGYV. Histidine 51 and histidine 65 together coordinate heme b.

It belongs to the cytochrome b family. As to quaternary structure, the cytochrome bc1 complex contains 3 respiratory subunits (MT-CYB, CYC1 and UQCRFS1), 2 core proteins (UQCRC1 and UQCRC2) and probably 6 low-molecular weight proteins. Requires heme b as cofactor.

Its subcellular location is the mitochondrion inner membrane. Functionally, component of the ubiquinol-cytochrome c reductase complex (complex III or cytochrome b-c1 complex) that is part of the mitochondrial respiratory chain. The b-c1 complex mediates electron transfer from ubiquinol to cytochrome c. Contributes to the generation of a proton gradient across the mitochondrial membrane that is then used for ATP synthesis. The sequence is that of Cytochrome b (mt-cyb) from Polypterus sp. (Bichir).